The following is a 625-amino-acid chain: ATP-binding cassette sub-family F member 2 (625 aa).

Residues 1-54 (MPSDLAKKKAAKKKEAAKARQRPRKGHEENGDAITEPQVAEERNEEANGRETTE) form a disordered region. A compositionally biased stretch (basic and acidic residues) spans 40–54 (AEERNEEANGRETTE). ABC transporter domains follow at residues 88 to 327 (AHII…ENQM) and 398 to 615 (IMVQ…VGEE). An ATP-binding site is contributed by 120–127 (GLNGIGKS). Thr-220 bears the Phosphothreonine mark. Lys-306 carries the post-translational modification N6-acetyllysine. 432 to 439 (GPNGAGKS) is a binding site for ATP. The residue at position 514 (Ser-514) is a Phosphoserine.

It belongs to the ABC transporter superfamily. ABCF family. EF3 subfamily.

This chain is ATP-binding cassette sub-family F member 2 (ABCF2), found in Bos taurus (Bovine).